The primary structure comprises 1241 residues: MDNALCYLQHLKDERQFIFGILNDNVREINIAKKEIKQLREYVGILQQNGFTGEALVSQMEYSMKIKKIKKLSSQYDINSAENSSGPYDFSFIGNELTIFRERLSNYSSWGVMHSIPSMPESIYIYMNPIHQTDEVDIVYQGSNDNYSYLIKKNGRTASYEHQITLNLAKDAVKKHNLREATKQRIVNNRKVNFITKYTEVTTNGKTDQLAVPLFLLHLVKTATGYKVSYITIKIILEEQVESNVNIVEIDTGVEMTNAEVNAIITGLLSRMMMVTNFVLGNSMVHRRMLRQFIGMQVKVIEGAYVINSQKGAGSNLLSGMYGQGVIATLSSLATLLESTPQTVKPNYVLNGIHTNDIEQKEYEVSSILKYTTNKSKDRKVGLAERISNINKPYSVTMTLGKGNGGILAIREYSALKFNYDYPDQLDDIIPSNADSSRPDAVRMTMTKTQSNNDIKITTTVHIILDITDYKDKKVSEGVIHTTLRKSGIYVKLEAIHNQTRSEAPGSLGGTDSLVSTTLCGIAQVHSKTSALSELSNNGGVDFFDGDDVKRDNNMCTNRKNFCVKFTTTSRSSPSVTLDIKSLGKRYKGNFPMIIQRVVDLTGREAWAYEAQLSSITMDNVQLRFGSKQEISIKETSQQFVYDDNGIIKVKYEKTLSGSVLKDGSKITTVIPDQKFNSINDIDNILTSRNQRNLRHRDVPWTGANNATAKYNGFRDDGMWGRKESGLMQYNNEDDVIIPIAFLGYTTSGSGGSRYILREYDIERAQQLMHTITRRDRSNTRQGQKNIYVRDGTSSGGYVANWHAMKTSMYMSLPGKNIMIKNVEINDIQELVLPNGVYDQILLSATNITLWNSVLILNQYVVYIKELAEDNARRLDVVEKTLNKVIELHQTMTVTPEETAQEESGWDIAGRIFTMLGAVVGMFFPIIGASIEVLGLVATGVGSIQQGHIVNGSLELTLAGVATVIGGYKLQKRLRQKYTLEGIKDSIKIKMDKLKEKFGTRVKNTHIGKEDSNNGVSTSTNKRSIGKANNTLTGTTDIEIVNDVINGQSAHITKTTYSQISPELQDCYRELDALLELTGNVEHWPSGLNLATAFDIRLTEKIDKIGKGKMSINAIVHGEQRTAEVNDAVWSKCVGVKANVEDYTIIRSAYVDTVQKEEMINVDRDIIRDIYTANGTKIVEKTSVGINSNNVNGKEYTVTQDGDISQLEHVITSGTVNDQSMQLIIQRCVLYYSELSSSPSD.

Residues 21–49 (ILNDNVREINIAKKEIKQLREYVGILQQN) adopt a coiled-coil conformation. 3 helical membrane-spanning segments follow: residues 261–281 (VNAI…FVLG), 918–938 (AVVG…GLVA), and 947–967 (GHIV…VIGG). The segment at 1005–1028 (THIGKEDSNNGVSTSTNKRSIGKA) is disordered. Positions 1013-1028 (NNGVSTSTNKRSIGKA) are enriched in polar residues.

The protein localises to the host membrane. This is an uncharacterized protein from Diadromus pulchellus (Parasitic wasp).